The following is a 199-amino-acid chain: Chaperone protein TorD (199 aa).

Belongs to the TorD/DmsD family. TorD subfamily.

Its subcellular location is the cytoplasm. In terms of biological role, involved in the biogenesis of TorA. Acts on TorA before the insertion of the molybdenum cofactor and, as a result, probably favors a conformation of the apoenzyme that is competent for acquiring the cofactor. This is Chaperone protein TorD from Escherichia coli O45:K1 (strain S88 / ExPEC).